We begin with the raw amino-acid sequence, 349 residues long: Nitrilase, bromoxynil-specific (349 aa).

The 270-residue stretch at 5-274 folds into the CN hydrolase domain; sequence FKAAAVQAEP…EGIVYAEIDL (270 aa). Glu-45 serves as the catalytic Proton acceptor. Lys-127 functions as the Proton donor in the catalytic mechanism. Catalysis depends on Cys-161, which acts as the Nucleophile.

Belongs to the carbon-nitrogen hydrolase superfamily. Nitrilase family. As to quaternary structure, homodimer.

It carries out the reaction a nitrile + 2 H2O = a carboxylate + NH4(+). Its function is as follows. Specific for the herbicide bromoxynil (3,5-dibromo-4-hydroxybenzonitrile); converts it to its metabolite 3,5-dibromo-4-hydroxybenzoic acid. The sequence is that of Nitrilase, bromoxynil-specific (bxn) from Klebsiella pneumoniae subsp. ozaenae.